Here is a 462-residue protein sequence, read N- to C-terminus: Cysteine--tRNA ligase (462 aa).

C29 is a binding site for Zn(2+). Residues 31-41 carry the 'HIGH' region motif; that stretch reads MTVYDLCHLGH. Zn(2+)-binding residues include C217, H242, and E246. Positions 274–278 match the 'KMSKS' region motif; sequence KMSKS. K277 is a binding site for ATP.

The protein belongs to the class-I aminoacyl-tRNA synthetase family. Monomer. The cofactor is Zn(2+).

The protein localises to the cytoplasm. The catalysed reaction is tRNA(Cys) + L-cysteine + ATP = L-cysteinyl-tRNA(Cys) + AMP + diphosphate. The sequence is that of Cysteine--tRNA ligase from Polaromonas sp. (strain JS666 / ATCC BAA-500).